We begin with the raw amino-acid sequence, 139 residues long: uncharacterized protein (139 aa).

2 helical membrane passes run 35 to 55 (AYFKVFSFFFFLLLTLGAAAA) and 119 to 139 (CCLFCCSSSYCLAGVLCVFCV).

The protein resides in the membrane. This is an uncharacterized protein from Saccharomyces cerevisiae (strain ATCC 204508 / S288c) (Baker's yeast).